Reading from the N-terminus, the 485-residue chain is Palmitoyltransferase ZDHHC1 (485 aa).

The segment at 1 to 41 (MYKMNICNKPSNKTAPEKSVWTAPAQPSGPSPELQGQRSRR) is disordered. The Cytoplasmic segment spans residues 1 to 52 (MYKMNICNKPSNKTAPEKSVWTAPAQPSGPSPELQGQRSRRNGWSWPPHPLQ). Positions 1 to 271 (MYKMNICNKP…GHLLCFHIYL (271 aa)) are mediates interaction with STING1. Residues 53–73 (IVAWLLYLFFAVIGFGILVPL) traverse the membrane as a helical segment. Topologically, residues 74 to 77 (LPHH) are lumenal. A helical transmembrane segment spans residues 78 to 98 (WVPAGYACMGAIFAGHLVVHL). The Cytoplasmic portion of the chain corresponds to 99 to 185 (TAVSIDPADA…YRLFLHSVAS (87 aa)). A DHHC domain is found at 134-184 (LHCNLCNVDVSARSKHCSACNKCVCGFDHHCKWLNNCVGERNYRLFLHSVA). The active-site S-palmitoyl cysteine intermediate is C164. Residues 186-206 (ALLGVLLLVLVATYVFVEFFV) traverse the membrane as a helical segment. At 207–241 (NPMRLRTNRHFEVLKNHTDVWFVFLPAAPVETQAP) the chain is on the lumenal side. The helical transmembrane segment at 242–262 (AILALAALLILLGLLSTALLG) threads the bilayer. Topologically, residues 263–485 (HLLCFHIYLM…RGRRVRPPFS (223 aa)) are cytoplasmic. 2 disordered regions span residues 324–358 (EPPGQAGPAAVNAKHSRPASPDPTPGRRDCAGPPV) and 462–485 (LWPPRGAGADSPRWRGRRVRPPFS). The span at 475–485 (WRGRRVRPPFS) shows a compositional bias: basic residues.

The protein belongs to the DHHC palmitoyltransferase family. In terms of assembly, interacts with STING1; ZDHHC1 constitutively interacts with STING1 and in presence of DNA viruses activates it by promoting its cGAMP-induced oligomerization and the recruitment of downstream signaling components. As to expression, widely expressed with significant expression in heart, brain, placenta, lung, liver, kidney, testis, thymus and small intestine. Expressed at lower levels in adult pancreas and lung.

It is found in the endosome membrane. Its subcellular location is the endoplasmic reticulum membrane. The protein localises to the golgi apparatus. The enzyme catalyses L-cysteinyl-[protein] + hexadecanoyl-CoA = S-hexadecanoyl-L-cysteinyl-[protein] + CoA. Its function is as follows. Palmitoyltransferase that catalyzes the addition of palmitate onto various protein substrates, such as NCDN and NLRP3. Has a palmitoyltransferase activity toward NCDN and regulates NCDN association with endosome membranes through this palmitoylation. Acts as an activator of the NLRP3 inflammasome by mediating palmitoylation of 'Cys-130' and 'Cys-958' of NLRP3, thereby promoting NLRP3 phosphorylation and activation by NEK7. In terms of biological role, also has a palmitoyltransferase activity-independent function in DNA virus-triggered and CGAS-mediated innate immune response. Functions as an activator of STING1 by promoting its cGAMP-induced oligomerization and the recruitment of downstream signaling components. The chain is Palmitoyltransferase ZDHHC1 from Homo sapiens (Human).